We begin with the raw amino-acid sequence, 461 residues long: pre-mRNA splicing regulator USH1G (461 aa).

ANK repeat units lie at residues 31-60, 64-93, and 97-126; these read DGMTPTLWAAYHGNLESLRLIVSRGGDPDK, WGNTPLHLAASNGHLHCLSFLVSFGANIWC, and DYHTPLDMAAMKGHMECVRYLDSIAAKQSS. Positions 329 to 368 are disordered; the sequence is LGREDGGLDGAGTPRGRLHSSPSLDDDSLGSANSLQDRSC. Positions 385-447 constitute an SAM domain; sequence LEPETSPLET…KILGAVRRRR (63 aa). At Ser-422 the chain carries Phosphoserine.

Part of a complex composed of USH1C, USH1G and MYO7A. Interacts with USH1C (via the first PDZ domain). Interacts with PDZD7. Interacts with CDH23 and PCDH15; these interactions may recruit USH1G to the plasma membrane. Interacts with intraflagellar transport proteins IFT20, IFT52 and IFT57. Interacts with splicing factors SF3B1, PRPF6, PRPF31 and SON. Interacts with the U4/U6.U5 tri-small nuclear ribonucleoprotein (tri-snRNP) complex in the presence of pre-mRNAs. Interacts (via SAM domain) with MAGI2 (via PDZ 6 domain); the interaction is triggered by phosphorylation of USH1G by CK2 and negatively regulates MAGI2-mediated endocytosis. Detected in stereocilia from cochlear hair cells (at protein level). Detected in retinal photoreceptor cell cilia (at protein level). Highly expressed in the cochlea, testis, cerebellum and eye, and low levels in brain, thymus and spleen. Significant signals detected in the neurosensory epithelium of inner ear cochlea and saccule, especially in inner and outer hair cells.

It localises to the cytoplasm. The protein resides in the cytosol. It is found in the cytoskeleton. The protein localises to the cell membrane. Its subcellular location is the cell projection. It localises to the cilium. The protein resides in the nucleus speckle. It is found in the nucleus. The protein localises to the cajal body. Its subcellular location is the microtubule organizing center. It localises to the centrosome. The protein resides in the photoreceptor inner segment. In terms of biological role, plays a role in pre-mRNA splicing by regulating the release and transfer of U4/U6.U5 tri-small nuclear ribonucleoprotein (tri-snRNP) complexes from their assembly site in Cajal bodies to nuclear speckles, thereby contributing to the assembly of the pre-catalytic spliceosome on target pre-mRNAs. May also participate in recycling of snRNPs back to Cajal bodies during splicing. Plays a role in regulating MAGI2-mediated endocytosis. Anchoring/scaffolding protein that is a part of the functional network formed by USH1C, USH1G, CDH23 and MYO7A that mediates mechanotransduction in cochlear hair cells. Required for normal development and maintenance of cochlear hair cell bundles. Required for normal hearing. In Mus musculus (Mouse), this protein is pre-mRNA splicing regulator USH1G (Ush1g).